The chain runs to 89 residues: Small ribosomal subunit protein bS20 (89 aa).

The disordered stretch occupies residues 1–22; sequence MANTASARKRIRQNERRRERNV. Residues 12–22 are compositionally biased toward basic and acidic residues; sequence RQNERRRERNV.

It belongs to the bacterial ribosomal protein bS20 family.

Binds directly to 16S ribosomal RNA. The polypeptide is Small ribosomal subunit protein bS20 (Gluconobacter oxydans (strain 621H) (Gluconobacter suboxydans)).